The primary structure comprises 468 residues: ATP synthase subunit beta (468 aa).

Residue 155–162 coordinates ATP; it reads GGAGVGKT.

Belongs to the ATPase alpha/beta chains family. In terms of assembly, F-type ATPases have 2 components, CF(1) - the catalytic core - and CF(0) - the membrane proton channel. CF(1) has five subunits: alpha(3), beta(3), gamma(1), delta(1), epsilon(1). CF(0) has three main subunits: a(1), b(2) and c(9-12). The alpha and beta chains form an alternating ring which encloses part of the gamma chain. CF(1) is attached to CF(0) by a central stalk formed by the gamma and epsilon chains, while a peripheral stalk is formed by the delta and b chains.

It is found in the cell membrane. The enzyme catalyses ATP + H2O + 4 H(+)(in) = ADP + phosphate + 5 H(+)(out). Functionally, produces ATP from ADP in the presence of a proton gradient across the membrane. The catalytic sites are hosted primarily by the beta subunits. The chain is ATP synthase subunit beta from Streptococcus pyogenes serotype M5 (strain Manfredo).